Here is a 171-residue protein sequence, read N- to C-terminus: UPF0312 protein SAOUHSC_03022 (171 aa).

The protein belongs to the UPF0312 family.

The chain is UPF0312 protein SAOUHSC_03022 from Staphylococcus aureus (strain NCTC 8325 / PS 47).